The sequence spans 195 residues: Thioredoxin reductase-like selenoprotein T (195 aa).

A signal peptide spans 1–19 (MRLLLLLLVAASAVVRSEA). The cysteinyl-selenocysteine (Cys-Sec) cross-link spans 46–49 (CVSU). A non-standard amino acid (selenocysteine) is located at residue Sec-49. Residues 85–103 (IASFLSVFKLVLIGLIIVG) traverse the membrane as a helical segment.

The protein belongs to the SelWTH family. Selenoprotein T subfamily. Post-translationally, may contain a selenide-sulfide bond between Cys-46 and Sec-49. This bond is speculated to serve as redox-active pair. In terms of tissue distribution, ubiquitous. Highly expressed in the endocrine pancreas. Expressed at low levels in the adult brain.

Its subcellular location is the endoplasmic reticulum membrane. It carries out the reaction [thioredoxin]-dithiol + NADP(+) = [thioredoxin]-disulfide + NADPH + H(+). Its function is as follows. Selenoprotein with thioredoxin reductase-like oxidoreductase activity. Protects dopaminergic neurons against oxidative stress and cell death. Involved in ADCYAP1/PACAP-induced calcium mobilization and neuroendocrine secretion. Plays a role in fibroblast anchorage and redox regulation. In gastric smooth muscle, modulates the contraction processes through the regulation of calcium release and MYLK activation. In pancreatic islets, involved in the control of glucose homeostasis, contributes to prolonged ADCYAP1/PACAP-induced insulin secretion. The polypeptide is Thioredoxin reductase-like selenoprotein T (Mus musculus (Mouse)).